A 220-amino-acid chain; its full sequence is Ribonuclease P protein subunit p29 (220 aa).

Serine 10 carries the phosphoserine modification.

The protein belongs to the eukaryotic/archaeal RNase P protein component 1 family. Component of nuclear RNase P and RNase MRP ribonucleoproteins. RNase P consists of a catalytic RNA moiety and 10 different protein chains; POP1, POP4, POP5, POP7, RPP14, RPP21, RPP25, RPP30, RPP38 and RPP40. Within the RNase P complex, POP1, POP7 and RPP25 form the 'finger' subcomplex, POP5, RPP14, RPP40 and homodimeric RPP30 form the 'palm' subcomplex, and RPP21, POP4 and RPP38 form the 'wrist' subcomplex. All subunits of the RNase P complex interact with the catalytic RNA. Several subunits of RNase P are also part of the RNase MRP complex. RNase MRP consists of a catalytic RNA moiety and about 8 protein subunits; POP1, POP7, RPP25, RPP30, RPP38, RPP40 and possibly also POP4 and POP5.

The protein resides in the nucleus. The protein localises to the nucleolus. Component of ribonuclease P, a ribonucleoprotein complex that generates mature tRNA molecules by cleaving their 5'-ends. This is Ribonuclease P protein subunit p29 (POP4) from Pongo abelii (Sumatran orangutan).